Here is a 157-residue protein sequence, read N- to C-terminus: MSRRRVTVKRVILADPRFKSDLLSKFINILMFNGKKSVAESIIYSALDMVLDRSSKDSCMELFEEALDNVRPVVEVKSRRVGGSTYQVPVEVRLVRRNTLAMRWIIESARKRNDKSMEMRLANELFDASEGKGNAVKKREEVHRLAESNKAFAHYRW.

It belongs to the universal ribosomal protein uS7 family. In terms of assembly, part of the 30S ribosomal subunit. Contacts proteins S9 and S11.

One of the primary rRNA binding proteins, it binds directly to 16S rRNA where it nucleates assembly of the head domain of the 30S subunit. Is located at the subunit interface close to the decoding center, probably blocks exit of the E-site tRNA. The chain is Small ribosomal subunit protein uS7 from Blochmanniella floridana.